The chain runs to 744 residues: CCR4-NOT transcription complex subunit 10 (744 aa).

Positions 1–16 are enriched in basic and acidic residues; sequence MAADKPADQGAEKHEG. Residues 1–25 form a disordered region; it reads MAADKPADQGAEKHEGTGQSSGITD. Ala2 is subject to N-acetylalanine. Residues 74 to 107 adopt a coiled-coil conformation; it reads KSNQTTTDNLRQTLNQLKNQVHSAVEEMDGLDDV. Residues 183-199 are compositionally biased toward low complexity; it reads NNNKNGKNETGNNNNKD. Disordered regions lie at residues 183 to 204, 477 to 521, and 602 to 634; these read NNNKNGKNETGNNNNKDGSNHK, QDPK…PPSS, and VSLGISSNEQDQGSDKGENEAMESSGKRAPQCY. Positions 484–495 are enriched in polar residues; it reads GAKNSNQLGGNT. A compositionally biased stretch (low complexity) spans 496–506; that stretch reads ESSESSETCSS. The segment covering 602 to 612 has biased composition (polar residues); the sequence is VSLGISSNEQD.

It belongs to the CNOT10 family. Component of the CCR4-NOT complex; distinct complexes seem to exist that differ in the participation of probably mutually exclusive catalytic subunits. CNOT10 and CNOT11 form a subcomplex docked to the CNOT1 scaffold.

The protein localises to the cytoplasm. It is found in the nucleus. Component of the CCR4-NOT complex which is one of the major cellular mRNA deadenylases and is linked to various cellular processes including bulk mRNA degradation, miRNA-mediated repression, translational repression during translational initiation and general transcription regulation. Additional complex functions may be a consequence of its influence on mRNA expression. Is not required for association of CNOT7 to the CCR4-NOT complex. In Macaca fascicularis (Crab-eating macaque), this protein is CCR4-NOT transcription complex subunit 10 (CNOT10).